The primary structure comprises 72 residues: Aurein-2.5 (72 aa).

Residues 1–22 (MAFLKKSLFLVLFLGLVSLSIC) form the signal peptide. The propeptide occupies 23 to 49 (EKEKRQNEEDEDENEAANHEEGSEEKR). The segment at 27 to 47 (RQNEEDEDENEAANHEEGSEE) is disordered. Residues 38–47 (AANHEEGSEE) show a composition bias toward basic and acidic residues. Leu65 carries the post-translational modification Leucine amide. Residues 69–72 (NDLE) constitute a propeptide that is removed on maturation.

This sequence belongs to the frog skin active peptide (FSAP) family. Aurein subfamily. As to quaternary structure, may be monomeric or may oligomerize as homodimers or homotrimers in Gram-positive and Gram-negative bacteria mimetic membranes. In terms of processing, C-terminal amidation enhances antibacterial activity. This increase may be due to stabilization of the alpha-helical structure at the membrane interface. As to expression, expressed by the skin dorsal glands.

The protein resides in the secreted. It localises to the target cell membrane. Its function is as follows. Amphipathic alpha-helical antimicrobial peptide with moderate to potent activity against Gram-positive bacteria, Gram-negative bacteria and fungi. Also shows a weak activity against biofilm of both Gram-positive and Gram-negative bacteria. Probably acts by disturbing membrane functions with its amphipathic structure. Kills fungi via membranolytic action. Enhanced sterol levels in lipid composition membranes reduce interaction of this peptide with membranes, having a protective effect against the lytic ability of the peptide. Shows anticancer activity. This is Aurein-2.5 from Ranoidea aurea (Green and golden bell frog).